The chain runs to 595 residues: Probable hydrolase M10 (595 aa).

An N-terminal signal peptide occupies residues 1-23; the sequence is MRFTSTILLRVAVLLSLGGGSQT. Residues Asn-59, Asn-87, Asn-266, Asn-436, Asn-457, and Asn-561 are each glycosylated (N-linked (GlcNAc...) asparagine).

This sequence belongs to the beta-lactamase family.

Its pathway is secondary metabolite biosynthesis. Probable hydrolase; part of the gene cluster that mediates the biosynthesis of squalestatin S1 (SQS1, also known as zaragozic acid A), a heavily oxidized fungal polyketide that offers potent cholesterol lowering activity by targeting squalene synthase (SS). SQS1 is composed of a 2,8-dioxobicyclic[3.2.1]octane-3,4,5-tricarboxyclic acid core that is connected to two lipophilic polyketide arms. These initial steps feature the priming of an unusual benzoic acid starter unit onto the highly reducing polyketide synthase pks2, followed by oxaloacetate extension and product release to generate a tricarboxylic acid containing product. The phenylalanine ammonia lyase (PAL) M7 and the acyl-CoA ligase M9 are involved in transforming phenylalanine into benzoyl-CoA. The citrate synthase-like protein R3 is involved in connecting the C-alpha-carbons of the hexaketide chain and oxaloacetate to afford the tricarboxylic acid unit. The potential hydrolytic enzymes, M8 and M10, are in close proximity to pks2 and may participate in product release. On the other side, the tetraketide arm is synthesized by a the squalestatin tetraketide synthase pks1 and enzymatically esterified to the core in the last biosynthetic step, by the acetyltransferase M4. The biosynthesis of the tetraketide must involve 3 rounds of chain extension. After the first and second rounds methyl-transfer occurs, and in all rounds of extension the ketoreductase and dehydratase are active. The enoyl reductase and C-MeT of pks1 are not active in the final round of extension. The acetyltransferase M4 appears to have a broad substrate selectivity for its acyl CoA substrate, allowing the in vitro synthesis of novel squalestatins. The biosynthesis of SQS1 requires several oxidative steps likely performed by oxidoreductases M1, R1 and R2. Finally, in support of the identification of the cluster as being responsible for SQS1 production, the cluster contains a gene encoding a putative squalene synthase (SS) R6, suggesting a likely mechanism for self-resistance. This Phoma sp. (strain ATCC 20986 / MF5453) protein is Probable hydrolase M10.